Reading from the N-terminus, the 204-residue chain is Ras-related protein Rab-1D (204 aa).

GTP is bound by residues 17–25 (GDSGVGKSC), 35–42 (WTDTHIST), 65–69 (DTAGQ), 123–126 (NKTD), and 153–155 (SAK). Residues 39–47 (HISTIGVDF) carry the Effector region motif. A compositionally biased stretch (basic and acidic residues) spans 182 to 191 (PKPDEVDIKS). The tract at residues 182-204 (PKPDEVDIKSKNKTKSGGKKSFC) is disordered. Over residues 192-204 (KNKTKSGGKKSFC) the composition is skewed to basic residues. C204 carries the S-geranylgeranyl cysteine lipid modification.

This sequence belongs to the small GTPase superfamily. Rab family.

It is found in the cell membrane. This is Ras-related protein Rab-1D (rab1D) from Dictyostelium discoideum (Social amoeba).